A 351-amino-acid polypeptide reads, in one-letter code: MDLVQSTINQIGPLDDRAATAARRRQDMLTKPAGSLGRLEELSIRIAGITGRERPRLTNPAVIVMAADHGVARQGVSAFPAEVTPQMVLNFLRGGAAINVLARHVGARVIVVDIGVATDLPPHPDLVSRKLAYGTADFSQEPAMSHETARQAIAVGIACANQAIDSGVDLLATGEMGIANTTAASAVVAAITRRPASEVTGRGTGIDDSGLARKIAVIEQALHRHQPNPDDGLDVLAKVGGLEIGGLAGVILGAAARRVPVVIDGFIAGAAALIAATLAPAATAYMIAGHRSVERGHAAVFSHLDLQPLLDLNMRLGEGTGAVLAMSICQAACKILDEMATFAEAGVSEKV.

The Proton acceptor role is filled by E318.

This sequence belongs to the CobT family.

The enzyme catalyses 5,6-dimethylbenzimidazole + nicotinate beta-D-ribonucleotide = alpha-ribazole 5'-phosphate + nicotinate + H(+). It participates in nucleoside biosynthesis; alpha-ribazole biosynthesis; alpha-ribazole from 5,6-dimethylbenzimidazole: step 1/2. In terms of biological role, catalyzes the synthesis of alpha-ribazole-5'-phosphate from nicotinate mononucleotide (NAMN) and 5,6-dimethylbenzimidazole (DMB). This is Nicotinate-nucleotide--dimethylbenzimidazole phosphoribosyltransferase from Chloroflexus aurantiacus (strain ATCC 29366 / DSM 635 / J-10-fl).